The following is a 263-amino-acid chain: 3-methyl-2-oxobutanoate hydroxymethyltransferase (263 aa).

2 residues coordinate Mg(2+): D45 and D84. 3-methyl-2-oxobutanoate-binding positions include D45–S46, D84, and K112. Position 114 (E114) interacts with Mg(2+). E181 functions as the Proton acceptor in the catalytic mechanism.

The protein belongs to the PanB family. As to quaternary structure, homodecamer; pentamer of dimers. Mg(2+) is required as a cofactor.

It localises to the cytoplasm. The catalysed reaction is 3-methyl-2-oxobutanoate + (6R)-5,10-methylene-5,6,7,8-tetrahydrofolate + H2O = 2-dehydropantoate + (6S)-5,6,7,8-tetrahydrofolate. It participates in cofactor biosynthesis; (R)-pantothenate biosynthesis; (R)-pantoate from 3-methyl-2-oxobutanoate: step 1/2. Functionally, catalyzes the reversible reaction in which hydroxymethyl group from 5,10-methylenetetrahydrofolate is transferred onto alpha-ketoisovalerate to form ketopantoate. The protein is 3-methyl-2-oxobutanoate hydroxymethyltransferase of Buchnera aphidicola subsp. Acyrthosiphon pisum (strain APS) (Acyrthosiphon pisum symbiotic bacterium).